The primary structure comprises 860 residues: Leucine--tRNA ligase (860 aa).

The short motif at 42-52 is the 'HIGH' region element; that stretch reads PYPSGRLHMGH. Positions 619 to 623 match the 'KMSKS' region motif; that stretch reads KMSKS. ATP is bound at residue K622.

Belongs to the class-I aminoacyl-tRNA synthetase family.

It is found in the cytoplasm. The enzyme catalyses tRNA(Leu) + L-leucine + ATP = L-leucyl-tRNA(Leu) + AMP + diphosphate. This is Leucine--tRNA ligase from Yersinia pseudotuberculosis serotype O:3 (strain YPIII).